Consider the following 266-residue polypeptide: Derlin-1 (266 aa).

The Cytoplasmic portion of the chain corresponds to 1–20; the sequence is MSSPGEFYNSLPPITKAYGT. The helical transmembrane segment at 21-41 threads the bilayer; sequence LCFFTTVATQLGLVAPVHIAL. Residues 42–55 lie on the Lumenal side of the membrane; sequence IPELVLKQFQIWRL. Residues 56–76 form a helical membrane-spanning segment; it reads ITNLFFLGGFSINFGIRLLMI. Over 77–94 the chain is Cytoplasmic; it reads ARYGVQLEKGPFERRTAD. A helical membrane pass occupies residues 95–115; it reads FLWMMIFGSFTLLVLSVIPFF. The Lumenal portion of the chain corresponds to 116 to 156; sequence WTPFLGVSLVFMLLYLWSREFPNANISLYGLVTLKAFYLPW. Residues 157–177 form a helical membrane-spanning segment; sequence AMLALDVIFGSPIMPDLLGII. The Cytoplasmic segment spans residues 178-266; sequence AGHLYYFLTV…FRGRSYRLTD (89 aa). The interval 235-266 is disordered; that stretch reads GGVGGGGAYSSARAPPESSNTAFRGRSYRLTD.

Belongs to the derlin family.

The protein localises to the endoplasmic reticulum membrane. May be involved in the degradation process of specific misfolded endoplasmic reticulum (ER) luminal proteins. The chain is Derlin-1 (DER1) from Arabidopsis thaliana (Mouse-ear cress).